A 275-amino-acid chain; its full sequence is Galaxin-2 (275 aa).

Positions 1–20 (MTRFTSIGLCAVLLFNVCSC) are cleaved as a signal peptide.

In terms of tissue distribution, component of the acid-insoluble and acid-soluble organic matrix of the aragonitic skeleton (at protein level).

It is found in the secreted. The sequence is that of Galaxin-2 from Acropora millepora (Staghorn coral).